Consider the following 112-residue polypeptide: DNA-binding protein Mboo_1886 (112 aa).

The protein belongs to the PDCD5 family.

The sequence is that of DNA-binding protein Mboo_1886 from Methanoregula boonei (strain DSM 21154 / JCM 14090 / 6A8).